We begin with the raw amino-acid sequence, 1393 residues long: RNA polymerase II-associated protein 1 (1393 aa).

Disordered stretches follow at residues 34-53 (KKGNRGGGDANSDRPPLQDH), 61-94 (NLPDLPPALVPSPPKRARPSPGHCLPEDEDPEER), and 266-295 (SHTQEQTGETASEEQRPGGPSANVTKEEPL). Residues 64 to 74 (DLPPALVPSPP) are compositionally biased toward pro residues. S72 carries the post-translational modification Phosphoserine. T321 is modified (phosphothreonine). The segment at 496–531 (PSQEDKEDEDEDEECPAGKAKRKSPEEESRPPPDLA) is disordered. Positions 500–510 (DKEDEDEDEEC) are enriched in acidic residues. A compositionally biased stretch (basic and acidic residues) spans 518–531 (KSPEEESRPPPDLA). S1121 bears the Phosphoserine mark.

Belongs to the RPAP1 family. Part of an RNA polymerase II complex that contains POLR2A, POLR2B, POLR2C, POLR2D, POLR2E, POLR2F, POLR2G, POLR2H, POLR2I, POLR2J, POLR2K, POLR2L, RPAP1, FCP1 plus the general transcription factors TFIIB and TFIIF.

The protein resides in the nucleus. Functionally, forms an interface between the RNA polymerase II enzyme and chaperone/scaffolding protein, suggesting that it is required to connect RNA polymerase II to regulators of protein complex formation. Required for interaction of the RNA polymerase II complex with acetylated histone H3. In Homo sapiens (Human), this protein is RNA polymerase II-associated protein 1 (RPAP1).